A 168-amino-acid polypeptide reads, in one-letter code: Large ribosomal subunit protein uL10 (168 aa).

Belongs to the universal ribosomal protein uL10 family. In terms of assembly, part of the ribosomal stalk of the 50S ribosomal subunit. The N-terminus interacts with L11 and the large rRNA to form the base of the stalk. The C-terminus forms an elongated spine to which L12 dimers bind in a sequential fashion forming a multimeric L10(L12)X complex.

Functionally, forms part of the ribosomal stalk, playing a central role in the interaction of the ribosome with GTP-bound translation factors. The protein is Large ribosomal subunit protein uL10 of Ralstonia pickettii (strain 12J).